The following is a 183-amino-acid chain: Gamma-crystallin N (183 aa).

Beta/gamma crystallin 'Greek key' domains lie at 6 to 46 (GKII…RVET), 47 to 89 (GAWI…KPVR), 95 to 136 (YRLE…KVYG), and 138 to 180 (GAWV…RRVV).

Belongs to the beta/gamma-crystallin family. As to quaternary structure, monomer.

Functionally, crystallins are the dominant structural components of the vertebrate eye lens. The sequence is that of Gamma-crystallin N (crygn) from Xenopus tropicalis (Western clawed frog).